The following is a 134-amino-acid chain: Large ribosomal subunit protein uL16c (134 aa).

Positions 1–21 (MLSPKRTKYRKHHRGRMRGKA) are disordered.

It belongs to the universal ribosomal protein uL16 family. Part of the 50S ribosomal subunit.

The protein localises to the plastid. The protein resides in the chloroplast. The polypeptide is Large ribosomal subunit protein uL16c (Chlorella vulgaris (Green alga)).